Consider the following 144-residue polypeptide: D-aminoacyl-tRNA deacylase (144 aa).

The Gly-cisPro motif, important for rejection of L-amino acids motif lies at 136–137 (GP).

This sequence belongs to the DTD family. Homodimer.

Its subcellular location is the cytoplasm. It catalyses the reaction glycyl-tRNA(Ala) + H2O = tRNA(Ala) + glycine + H(+). It carries out the reaction a D-aminoacyl-tRNA + H2O = a tRNA + a D-alpha-amino acid + H(+). In terms of biological role, an aminoacyl-tRNA editing enzyme that deacylates mischarged D-aminoacyl-tRNAs. Also deacylates mischarged glycyl-tRNA(Ala), protecting cells against glycine mischarging by AlaRS. Acts via tRNA-based rather than protein-based catalysis; rejects L-amino acids rather than detecting D-amino acids in the active site. By recycling D-aminoacyl-tRNA to D-amino acids and free tRNA molecules, this enzyme counteracts the toxicity associated with the formation of D-aminoacyl-tRNA entities in vivo and helps enforce protein L-homochirality. This Histophilus somni (strain 129Pt) (Haemophilus somnus) protein is D-aminoacyl-tRNA deacylase.